A 209-amino-acid chain; its full sequence is Orotate phosphoribosyltransferase (209 aa).

5-phospho-alpha-D-ribose 1-diphosphate-binding positions include arginine 96, lysine 100, histidine 102, and 122-130; that span reads EDLISTGGS. Serine 126 is an orotate binding site.

Belongs to the purine/pyrimidine phosphoribosyltransferase family. PyrE subfamily. In terms of assembly, homodimer. Mg(2+) is required as a cofactor.

The enzyme catalyses orotidine 5'-phosphate + diphosphate = orotate + 5-phospho-alpha-D-ribose 1-diphosphate. The protein operates within pyrimidine metabolism; UMP biosynthesis via de novo pathway; UMP from orotate: step 1/2. Its function is as follows. Catalyzes the transfer of a ribosyl phosphate group from 5-phosphoribose 1-diphosphate to orotate, leading to the formation of orotidine monophosphate (OMP). The polypeptide is Orotate phosphoribosyltransferase (Lactococcus lactis subsp. lactis (strain IL1403) (Streptococcus lactis)).